Here is a 168-residue protein sequence, read N- to C-terminus: Small ribosomal subunit protein uS4 (168 aa).

An S4 RNA-binding domain is found at 103 to 167 (RRLQTIVYKK…SPFKKSIEEK (65 aa)).

It belongs to the universal ribosomal protein uS4 family. As to quaternary structure, part of the 30S ribosomal subunit. Contacts protein S5. The interaction surface between S4 and S5 is involved in control of translational fidelity.

Functionally, one of the primary rRNA binding proteins, it binds directly to 16S rRNA where it nucleates assembly of the body of the 30S subunit. Its function is as follows. With S5 and S12 plays an important role in translational accuracy. The polypeptide is Small ribosomal subunit protein uS4 (Staphylothermus marinus (strain ATCC 43588 / DSM 3639 / JCM 9404 / F1)).